A 147-amino-acid polypeptide reads, in one-letter code: MVHLTPEEKTAVNALWGKVNVDAVGGEALGRLLVVYPWTQRFFESFGDLSSPDAVMGNPKVKAHGKKVLGAFSDGLAHLDNLKGTFSQLSELHCDKLHVDPENFRLLGNVLVCVLARNFGKEFTPQMQAAYQKVVAGVANALAHKYH.

Valine 2 carries the N-acetylalanine; in variant Niigata modification. In terms of domain architecture, Globin spans 3 to 147 (HLTPEEKTAV…VANALAHKYH (145 aa)). Serine 51 is modified (phosphoserine). 2 residues coordinate heme b: histidine 64 and histidine 93.

This sequence belongs to the globin family. Heterotetramer of two alpha chains and two delta chains in adult hemoglobin A2 (HbA2). HbA2 represents less than 3.5% of adult hemoglobin. Red blood cells.

In terms of biological role, involved in oxygen transport from the lung to the various peripheral tissues. In Homo sapiens (Human), this protein is Hemoglobin subunit delta (HBD).